Consider the following 100-residue polypeptide: uncharacterized protein (100 aa).

A run of 3 helical transmembrane segments spans residues 9 to 29, 41 to 61, and 72 to 92; these read VYTY…SWVV, PYLI…ITAP, and SIPF…FLGI.

The protein localises to the membrane. This is an uncharacterized protein from Saccharomyces cerevisiae (strain ATCC 204508 / S288c) (Baker's yeast).